The chain runs to 512 residues: Bifunctional pantoate ligase/cytidylate kinase (512 aa).

Positions 1-276 are pantoate--beta-alanine ligase; the sequence is MKLQTSADLQ…CGEARLIDHR (276 aa). 27–34 contributes to the ATP binding site; it reads MGALHQGH. Catalysis depends on H34, which acts as the Proton donor. Residue Q58 participates in (R)-pantoate binding. Residue Q58 participates in beta-alanine binding. 147–150 is a binding site for ATP; that stretch reads GEKD. Residue Q153 coordinates (R)-pantoate. Residues L176 and 184–187 contribute to the ATP site; that span reads LSSR. The interval 277 to 512 is cytidylate kinase; the sequence is VLMSRLPILA…VPVEALNADA (236 aa).

The protein in the N-terminal section; belongs to the pantothenate synthetase family. This sequence in the C-terminal section; belongs to the cytidylate kinase family. Type 1 subfamily.

The protein localises to the cytoplasm. The catalysed reaction is (R)-pantoate + beta-alanine + ATP = (R)-pantothenate + AMP + diphosphate + H(+). It carries out the reaction CMP + ATP = CDP + ADP. The enzyme catalyses dCMP + ATP = dCDP + ADP. It functions in the pathway cofactor biosynthesis; (R)-pantothenate biosynthesis; (R)-pantothenate from (R)-pantoate and beta-alanine: step 1/1. Functionally, catalyzes the condensation of pantoate with beta-alanine in an ATP-dependent reaction via a pantoyl-adenylate intermediate. Its function is as follows. Catalyzes the transfer of a phosphate group from ATP to either CMP or dCMP to form CDP or dCDP and ADP, respectively. This is Bifunctional pantoate ligase/cytidylate kinase from Synechococcus sp. (strain RCC307).